A 414-amino-acid polypeptide reads, in one-letter code: Probable tRNA pseudouridine synthase D (414 aa).

Residue Asp90 is the Nucleophile of the active site. In terms of domain architecture, TRUD spans 162–382 (GFPNFFGVQR…SSGDYRIISA (221 aa)).

Belongs to the pseudouridine synthase TruD family.

It catalyses the reaction uridine(13) in tRNA = pseudouridine(13) in tRNA. Could be responsible for synthesis of pseudouridine from uracil-13 in transfer RNAs. This Picrophilus torridus (strain ATCC 700027 / DSM 9790 / JCM 10055 / NBRC 100828 / KAW 2/3) protein is Probable tRNA pseudouridine synthase D.